A 216-amino-acid chain; its full sequence is Lipoprotein signal peptidase (216 aa).

Positions 1 to 21 (MATSRTAPTRAPSLRSSPALE) are disordered. 3 helical membrane-spanning segments follow: residues 31 to 51 (VGAL…DQIT), 89 to 109 (GSTW…IWYA), and 114 to 134 (STAW…NLTD). Active-site residues include D149 and D164. A helical transmembrane segment spans residues 159 to 179 (IFNLADVAIVFSMGLFLLLTL). Residues 189-216 (QRDEGAGVSSASPAGDESAADKPENLSA) form a disordered region. Basic and acidic residues predominate over residues 207-216 (AADKPENLSA).

This sequence belongs to the peptidase A8 family.

Its subcellular location is the cell membrane. It catalyses the reaction Release of signal peptides from bacterial membrane prolipoproteins. Hydrolyzes -Xaa-Yaa-Zaa-|-(S,diacylglyceryl)Cys-, in which Xaa is hydrophobic (preferably Leu), and Yaa (Ala or Ser) and Zaa (Gly or Ala) have small, neutral side chains.. It functions in the pathway protein modification; lipoprotein biosynthesis (signal peptide cleavage). Functionally, this protein specifically catalyzes the removal of signal peptides from prolipoproteins. In Leifsonia xyli subsp. xyli (strain CTCB07), this protein is Lipoprotein signal peptidase.